Consider the following 769-residue polypeptide: P-selectin (769 aa).

Residues 1 to 32 (MASCPKAIWSWRFQRVVFRSVQLLCFSILIFE) form the signal peptide. The Extracellular segment spans residues 33-717 (LMTQKEVSAW…QEALTYIGGA (685 aa)). Residues N54 and N80 are each glycosylated (N-linked (GlcNAc...) asparagine). The region spanning 58–158 (AFCQKYYTDL…PCGKRKRALC (101 aa)) is the C-type lectin domain. Cystine bridges form between C60-C158, C131-C150, C163-C174, C168-C183, C185-C194, C200-C244, C230-C257, C262-C306, C292-C319, C324-C368, C354-C381, C386-C430, C416-C443, C448-C492, C478-C505, C510-C554, C540-C567, C581-C625, C611-C638, C643-C687, and C673-C700. Residues E121, N123, and N124 each contribute to the Ca(2+) site. N123 is an a carbohydrate binding site. A carbohydrate-binding residues include E133 and N146. The Ca(2+) site is built by N146 and D147. Residues 159 to 195 (YRASCQDMSCSKQGECIETIGNYTCSCYPGFYGPECE) enclose the EGF-like domain. N180 carries an N-linked (GlcNAc...) asparagine glycan. Sushi domains follow at residues 198–259 (RECG…QCVA), 260–321 (VQCP…VCKA), 322–383 (IACE…VCQA), 384–445 (LQCQ…ECQA), 446–507 (VTCA…TCEA), 508–569 (SKCP…SCKV), 579–640 (LRCP…TCRA), and 641–702 (VKCS…TCQA). Residues N212 and N219 are each glycosylated (N-linked (GlcNAc...) asparagine). N347 carries N-linked (GlcNAc...) asparagine glycosylation. The N-linked (GlcNAc...) asparagine glycan is linked to N398. N-linked (GlcNAc...) asparagine glycosylation is present at N604. N-linked (GlcNAc...) asparagine glycans are attached at residues N655, N662, and N680. The helical transmembrane segment at 718-734 (AAGTTGLVTSSILLALL) threads the bilayer. Residues 735–769 (RRRRRQKDDGKSPLNPQSHLGTYGVFTNAAFDPSP) lie on the Cytoplasmic side of the membrane. Positions 740 to 769 (QKDDGKSPLNPQSHLGTYGVFTNAAFDPSP) are disordered. An Endocytosis signal motif is present at residues 757–760 (YGVF). The tract at residues 760–769 (FTNAAFDPSP) is interaction with SNX17.

Belongs to the selectin/LECAM family. In terms of assembly, interacts with SNX17. Interacts with SELPLG/PSGL1 and PODXL2 and mediates neutrophil adhesion and leukocyte rolling. This interaction requires the sialyl-Lewis X epitope of SELPLG and PODXL2, and specific tyrosine sulfation on SELPLG. Interacts (via C-type lectin domain) with alpha-IIb/beta3 integrin ITGA2B:ITGB3 and alpha-V/beta-3 integrin ITGAV:ITGB3. Interacts with alpha5/beta1 integrin ITGA5:ITGB1 and alpha4/beta1 integrin ITGA4:ITGB.

It localises to the cell membrane. Functionally, ca(2+)-dependent receptor for myeloid cells that binds to carbohydrates on neutrophils and monocytes. Mediates the interaction of activated endothelial cells or platelets with leukocytes. The ligand recognized is sialyl-Lewis X. Mediates rapid rolling of leukocyte rolling over vascular surfaces during the initial steps in inflammation through interaction with SELPLG. Mediates cell-cell interactions and cell adhesion via the interaction with integrin alpha-IIb/beta3 (ITGA2B:ITGB3) and integrin alpha-V/beta-3 (ITGAV:ITGB3). The sequence is that of P-selectin (SELP) from Ovis aries (Sheep).